Here is a 466-residue protein sequence, read N- to C-terminus: Histone acetyltransferase type B catalytic subunit DDB_G0275159 (466 aa).

The 198-residue stretch at 169-366 (AVFRYHEKLQ…FRIAIKKRLY (198 aa)) folds into the N-acetyltransferase domain. Acetyl-CoA contacts are provided by residues 240–242 (YLI) and 247–253 (QRMGHGK). Residue Glu279 is the Proton donor/acceptor of the active site. A coiled-coil region spans residues 372 to 459 (DSEQIEKMKQ…LEENYHKTLS (88 aa)).

It belongs to the HAT1 family.

The catalysed reaction is L-lysyl-[protein] + acetyl-CoA = N(6)-acetyl-L-lysyl-[protein] + CoA + H(+). The chain is Histone acetyltransferase type B catalytic subunit DDB_G0275159 from Dictyostelium discoideum (Social amoeba).